The primary structure comprises 1239 residues: Zinc finger and BTB domain-containing protein 40 (1239 aa).

The BTB domain occupies 24–87 (CDCTISIGTI…MYTGKLPVGK (64 aa)). Disordered regions lie at residues 130-231 (SAPS…TSTE), 687-732 (HLEA…PDPA), and 779-801 (KELD…PKKK). Residues 136–145 (TFRKEPEKPQ) are compositionally biased toward basic and acidic residues. A compositionally biased stretch (polar residues) spans 181–199 (SVSQEMSVNSPTAQESQRN). Serine 190 carries the phosphoserine modification. Low complexity predominate over residues 200–212 (AETPAETPTTAEA). Residues 687-703 (HLEANNKEDEKAAKEDS) show a composition bias toward basic and acidic residues. The residue at position 703 (serine 703) is a Phosphoserine. A compositionally biased stretch (polar residues) spans 705–719 (PGEQNDQGETGSLPG). 10 consecutive C2H2-type zinc fingers follow at residues 807–830 (VTCD…LTEH), 836–858 (FSCE…LRLH), 864–887 (FMCK…KKKH), 893–915 (YACQ…VRTH), 921–944 (YVCR…HTFH), 950–973 (YDCK…HEVH), 978–1000 (HPCP…VVTH), 1006–1029 (FSCG…RTHH), 1046–1069 (LQCS…KAEH), and 1075–1098 (HECD…KCQH). A Glycyl lysine isopeptide (Lys-Gly) (interchain with G-Cter in SUMO2) cross-link involves residue lysine 1066. The C2H2-type 11; atypical zinc-finger motif lies at 1104-1127 (FRCLYCAATFRFPGALQHHVTTEH). The C2H2-type 12 zinc-finger motif lies at 1135-1158 (FPCELCGELFTSQAQLDSHLESEH).

Belongs to the krueppel C2H2-type zinc-finger protein family.

The protein resides in the nucleus. Functionally, may be involved in transcriptional regulation. In Homo sapiens (Human), this protein is Zinc finger and BTB domain-containing protein 40 (ZBTB40).